The primary structure comprises 274 residues: NADPH-dependent 7-cyano-7-deazaguanine reductase (274 aa).

Substrate is bound at residue 80–82; that stretch reads VES. Residue 82–83 participates in NADPH binding; the sequence is SK. The active-site Thioimide intermediate is the Cys181. The active-site Proton donor is the Asp188. 220–221 is a substrate binding site; it reads HE. Residue 249-250 participates in NADPH binding; it reads RG.

Belongs to the GTP cyclohydrolase I family. QueF type 2 subfamily. Homodimer.

The protein resides in the cytoplasm. It carries out the reaction 7-aminomethyl-7-carbaguanine + 2 NADP(+) = 7-cyano-7-deazaguanine + 2 NADPH + 3 H(+). It functions in the pathway tRNA modification; tRNA-queuosine biosynthesis. In terms of biological role, catalyzes the NADPH-dependent reduction of 7-cyano-7-deazaguanine (preQ0) to 7-aminomethyl-7-deazaguanine (preQ1). This is NADPH-dependent 7-cyano-7-deazaguanine reductase from Burkholderia multivorans (strain ATCC 17616 / 249).